Reading from the N-terminus, the 1345-residue chain is DNA-directed RNA polymerase subunit beta' (1345 aa).

Positions 60, 62, 75, and 78 each coordinate Zn(2+). Residues Asp536, Asp538, and Asp540 each coordinate Mg(2+). Positions 895, 974, 981, and 984 each coordinate Zn(2+). The segment at 1325 to 1345 is disordered; that stretch reads DDNDNPVDFGDEFRIDPDELK. The segment covering 1335-1345 has biased composition (basic and acidic residues); the sequence is DEFRIDPDELK.

This sequence belongs to the RNA polymerase beta' chain family. The RNAP catalytic core consists of 2 alpha, 1 beta, 1 beta' and 1 omega subunit. When a sigma factor is associated with the core the holoenzyme is formed, which can initiate transcription. Requires Mg(2+) as cofactor. Zn(2+) is required as a cofactor.

It catalyses the reaction RNA(n) + a ribonucleoside 5'-triphosphate = RNA(n+1) + diphosphate. DNA-dependent RNA polymerase catalyzes the transcription of DNA into RNA using the four ribonucleoside triphosphates as substrates. This chain is DNA-directed RNA polymerase subunit beta', found in Bifidobacterium animalis subsp. lactis (strain AD011).